Reading from the N-terminus, the 149-residue chain is C-type lectin domain family 2 member B (149 aa).

Residues 1-7 (MMTKHKK) lie on the Cytoplasmic side of the membrane. Residues 8–25 (CFIIVGVLITTNIITLIV) form a helical; Signal-anchor for type II membrane protein membrane-spanning segment. Topologically, residues 26–149 (KLTRDSQSLC…RKWICRKRIH (124 aa)) are extracellular. A disulfide bridge links cysteine 35 with cysteine 46. The C-type lectin domain occupies 42–145 (FQNKCYYFSK…CYTERKWICR (104 aa)). Residues asparagine 57, asparagine 62, and asparagine 100 are each glycosylated (N-linked (GlcNAc...) asparagine). 2 cysteine pairs are disulfide-bonded: cysteine 63/cysteine 144 and cysteine 123/cysteine 136.

Homodimer. Interacts with NKp80/KLRF1. In terms of processing, (Microbial infection) Ubiquitinated by human herpesvirus 8 protein K5, leading to endolysosomal degradation. Post-translationally, N-linked glycosylated; required to enable surface expression and the extent of surface expression correlates with the number of functional conventional N-glycosylation sites. As to expression, expressed preferentially in lymphoid tissues, and in most hematopoietic cell types.

The protein resides in the cell membrane. It is found in the golgi apparatus membrane. Its function is as follows. Membrane-bound protein expressed on myeloid cells which acts as a ligand to stimulate the activating receptor NKp80/KLRF1, expressed on the surface of natural killer (NK) cells. In turn, stimulates NK-cell cytotoxicity and cytokine production leading to the cytolysis of malignant CLEC2B-expressing myeloid cells. The protein is C-type lectin domain family 2 member B (CLEC2B) of Homo sapiens (Human).